Here is an 89-residue protein sequence, read N- to C-terminus: Small ribosomal subunit protein uS15 (89 aa).

Belongs to the universal ribosomal protein uS15 family. In terms of assembly, part of the 30S ribosomal subunit. Forms a bridge to the 50S subunit in the 70S ribosome, contacting the 23S rRNA.

In terms of biological role, one of the primary rRNA binding proteins, it binds directly to 16S rRNA where it helps nucleate assembly of the platform of the 30S subunit by binding and bridging several RNA helices of the 16S rRNA. Forms an intersubunit bridge (bridge B4) with the 23S rRNA of the 50S subunit in the ribosome. The chain is Small ribosomal subunit protein uS15 from Exiguobacterium sp. (strain ATCC BAA-1283 / AT1b).